A 317-amino-acid chain; its full sequence is Acetyl-coenzyme A carboxylase carboxyl transferase subunit beta (317 aa).

One can recognise a CoA carboxyltransferase N-terminal domain in the interval 30–299 (LWTKCVACTA…VLPPLNVREK (270 aa)). 4 residues coordinate Zn(2+): Cys-34, Cys-37, Cys-53, and Cys-56. Residues 34 to 56 (CVACTALTYTKDLQANQLVCTEC) form a C4-type zinc finger.

It belongs to the AccD/PCCB family. Acetyl-CoA carboxylase is a heterohexamer composed of biotin carboxyl carrier protein (AccB), biotin carboxylase (AccC) and two subunits each of ACCase subunit alpha (AccA) and ACCase subunit beta (AccD). Zn(2+) serves as cofactor.

The protein resides in the cytoplasm. The catalysed reaction is N(6)-carboxybiotinyl-L-lysyl-[protein] + acetyl-CoA = N(6)-biotinyl-L-lysyl-[protein] + malonyl-CoA. It participates in lipid metabolism; malonyl-CoA biosynthesis; malonyl-CoA from acetyl-CoA: step 1/1. Component of the acetyl coenzyme A carboxylase (ACC) complex. Biotin carboxylase (BC) catalyzes the carboxylation of biotin on its carrier protein (BCCP) and then the CO(2) group is transferred by the transcarboxylase to acetyl-CoA to form malonyl-CoA. The chain is Acetyl-coenzyme A carboxylase carboxyl transferase subunit beta from Crocosphaera subtropica (strain ATCC 51142 / BH68) (Cyanothece sp. (strain ATCC 51142)).